Consider the following 207-residue polypeptide: Ras-related protein Rab7 (207 aa).

GTP is bound by residues Gly-15–Thr-22, Asp-63–Gln-67, and Asn-125–Asp-128. Residues Cys-205 and Cys-207 are each lipidated (S-geranylgeranyl cysteine). Cys-207 is modified (cysteine methyl ester).

Belongs to the small GTPase superfamily. Rab family.

The protein resides in the cell membrane. Its function is as follows. Protein transport. Probably involved in vesicular traffic. The chain is Ras-related protein Rab7 from Prunus armeniaca (Apricot).